Here is a 342-residue protein sequence, read N- to C-terminus: tRNA N6-adenosine threonylcarbamoyltransferase (342 aa).

Fe cation-binding residues include His114 and His118. Substrate-binding positions include 136–140 (LVSGG), Asp169, Gly182, Asp186, and Asn275. Asp301 serves as a coordination point for Fe cation.

Belongs to the KAE1 / TsaD family. The cofactor is Fe(2+).

The protein resides in the cytoplasm. It carries out the reaction L-threonylcarbamoyladenylate + adenosine(37) in tRNA = N(6)-L-threonylcarbamoyladenosine(37) in tRNA + AMP + H(+). Its function is as follows. Required for the formation of a threonylcarbamoyl group on adenosine at position 37 (t(6)A37) in tRNAs that read codons beginning with adenine. Is involved in the transfer of the threonylcarbamoyl moiety of threonylcarbamoyl-AMP (TC-AMP) to the N6 group of A37, together with TsaE and TsaB. TsaD likely plays a direct catalytic role in this reaction. The sequence is that of tRNA N6-adenosine threonylcarbamoyltransferase from Streptococcus pyogenes serotype M2 (strain MGAS10270).